The sequence spans 411 residues: MSISFDLTIDDTRDQLARHARASLEAKPSLIGMSREEMAAALIAAGVPERQVKMRISQLWHWLYVRGVSDFADMRNISKDLRAMLAQHFTIARPEVVEEQISQDGTRKWLFRFPPRGAGRPVEIESVYIPEEGRGTLCISSQVGCTLTCSFCHTGTQKLVRNLTSEEILAQLLTARDRLGDFPDKDTPDGAMVPAEGRKITNIVMMGMGEPLYNFEEVKKALLIASDGDGLSLSKCRITLSTSGVVPEIYRTGDEIGVMLAISLHAVRDELRDILVPINKKYPLAELIKACREYPGLSNAKRITFEYVMLKDINDSLDDAKLLVKLLQGIPAKINLIPFNPWPGTNYQCSDWEQIEKFADYVNAAGYASPIRTPRGRDILAACGQLKSESERLRKSERLALEAMMIAGHGE.

Glutamate 125 functions as the Proton acceptor in the catalytic mechanism. A Radical SAM core domain is found at 131–380 (EEGRGTLCIS…IRTPRGRDIL (250 aa)). A disulfide bridge connects residues cysteine 138 and cysteine 383. [4Fe-4S] cluster is bound by residues cysteine 145, cysteine 149, and cysteine 152. Residues 209 to 210 (GE), serine 241, 263 to 265 (SLH), and asparagine 340 contribute to the S-adenosyl-L-methionine site. The S-methylcysteine intermediate role is filled by cysteine 383.

This sequence belongs to the radical SAM superfamily. RlmN family. [4Fe-4S] cluster serves as cofactor.

Its subcellular location is the cytoplasm. It catalyses the reaction adenosine(2503) in 23S rRNA + 2 reduced [2Fe-2S]-[ferredoxin] + 2 S-adenosyl-L-methionine = 2-methyladenosine(2503) in 23S rRNA + 5'-deoxyadenosine + L-methionine + 2 oxidized [2Fe-2S]-[ferredoxin] + S-adenosyl-L-homocysteine. The enzyme catalyses adenosine(37) in tRNA + 2 reduced [2Fe-2S]-[ferredoxin] + 2 S-adenosyl-L-methionine = 2-methyladenosine(37) in tRNA + 5'-deoxyadenosine + L-methionine + 2 oxidized [2Fe-2S]-[ferredoxin] + S-adenosyl-L-homocysteine. In terms of biological role, specifically methylates position 2 of adenine 2503 in 23S rRNA and position 2 of adenine 37 in tRNAs. m2A2503 modification seems to play a crucial role in the proofreading step occurring at the peptidyl transferase center and thus would serve to optimize ribosomal fidelity. The protein is Dual-specificity RNA methyltransferase RlmN of Brucella abortus (strain S19).